Reading from the N-terminus, the 228-residue chain is Trichome differentiation protein GL1 (228 aa).

HTH myb-type domains lie at 11 to 63 and 64 to 118; these read NQEY…MNYL and SPNV…SKKL. 2 consecutive DNA-binding regions (H-T-H motif) follow at residues 39–63 and 91–114; these read WNRI…MNYL and WSLI…NTHL.

Homodimer and heterodimer with MYB82. Interacts directly with GL3 and BHLH2. Part of a complex made of GL1, GL3 or BHLH2, and TTG1. Also interacts with BHLH2/EGL3/MYC146 and BHLH12/MYC1. Interacts with MYB82. Expressed in leaves, stems and flowers. Expressed in trichome cells and in leaf primordia.

Its subcellular location is the nucleus. Its function is as follows. Transcription activator, when associated with BHLH2/EGL3/MYC146 or BHLH12/MYC1. Involved in epidermal cell fate specification in leaves. Together with TTG1 and GL3, promotes trichome formation and endoreplication. Regulates the production of a signal that induces hair (trichome) precursor cells on leaf primordia to differentiate. Binds to the WER-binding sites (WBS) promoter regions and activates the transcription of target genes. The chain is Trichome differentiation protein GL1 from Arabidopsis thaliana (Mouse-ear cress).